Reading from the N-terminus, the 81-residue chain is Large ribosomal subunit protein bL31 (81 aa).

Residues Cys-16, Cys-18, Cys-38, and Cys-41 each contribute to the Zn(2+) site.

Belongs to the bacterial ribosomal protein bL31 family. Type A subfamily. Part of the 50S ribosomal subunit. Zn(2+) is required as a cofactor.

In terms of biological role, binds the 23S rRNA. The sequence is that of Large ribosomal subunit protein bL31 from Mycobacterium sp. (strain JLS).